The sequence spans 294 residues: Protein RarD (294 aa).

Residues Met1–Leu11 lie on the Cytoplasmic side of the membrane. Residues Leu12–Pro34 form a helical membrane-spanning segment. The region spanning Phe18 to Trp145 is the EamA domain. At Ala35–Glu37 the chain is on the periplasmic side. A helical membrane pass occupies residues Ile38–Trp60. The Cytoplasmic segment spans residues Arg61–Lys72. A helical transmembrane segment spans residues Ile73–Asn95. Residues Asn96–Met99 lie on the Periplasmic side of the membrane. The chain crosses the membrane as a helical span at residues Leu100–Gly122. The Cytoplasmic portion of the chain corresponds to Glu123–Met128. The chain crosses the membrane as a helical span at residues Gln129 to Thr146. The Periplasmic portion of the chain corresponds to Phe147 to Ser149. The chain crosses the membrane as a helical span at residues Leu150 to Val167. Topologically, residues Arg168–Met179 are cytoplasmic. Residues Leu180–Ile197 form a helical membrane-spanning segment. Residues Ala198–Ser211 are Periplasmic-facing. Residues Leu212 to Ala234 form a helical membrane-spanning segment. Residues Thr235–Arg238 are Cytoplasmic-facing. Residues Leu239–Tyr261 traverse the membrane as a helical segment. At Gly262–Met270 the chain is on the periplasmic side. A helical transmembrane segment spans residues Val271–Thr290. The Cytoplasmic portion of the chain corresponds to Gln291–Lys294.

It belongs to the EamA transporter family.

The protein localises to the cell inner membrane. The sequence is that of Protein RarD (rarD) from Salmonella typhi.